The sequence spans 286 residues: MRYIRLCIISLLATLPLAVHASPQPLEQIKQSESQLSGRVGMIEMDLASGRTLTAWRADERFPMMSTFKVVLCGAVLARVDAGDEQLERKIHYRQQDLVDYSPVSEKHLADGMTVGELCAAAITMSDNSAANLLLATVGGPAGLTAFLRQIGDNVTRLDRWETELNEALPGDARDTTTPASMAATLRKLLTSQRLSARSQRQLLQWMVDDRVAGPLIRSVLPAGWFIADKTGAAERGARGIVALLGPNNKAERIVVIYLRDTPASMAERNQQIAGIGAALIEHWQR.

Residues 1 to 21 form the signal peptide; sequence MRYIRLCIISLLATLPLAVHA. Catalysis depends on S66, which acts as the Acyl-ester intermediate. C73 and C119 are joined by a disulfide. The Proton acceptor role is filled by E164. Residue 230 to 232 coordinates substrate; it reads KTG.

The protein belongs to the class-A beta-lactamase family.

It catalyses the reaction a beta-lactam + H2O = a substituted beta-amino acid. Inhibited 16-fold better by the beta-lactamase inhibitor clavulanic acid than by tazobactam. In terms of biological role, broad spectrum beta-lactamase which hydrolyzes penicillins, as well as cephalosporins except cephamycins. Also hydrolyzes aztreonam, but not imipenem. Confers highly resistance to ceftazidime, cefotaxime, aztreonam and piperacillin. The polypeptide is Beta-lactamase SHV-13 (bla) (Klebsiella pneumoniae).